The sequence spans 727 residues: Prolyl endopeptidase-like (727 aa).

Active-site charge relay system residues include Ser-559, Asp-645, and His-690.

This sequence belongs to the peptidase S9A family. As to quaternary structure, homodimer. Interacts with the AP-1 complex.

It localises to the cytoplasm. The protein localises to the cytosol. The protein resides in the golgi apparatus. It is found in the trans-Golgi network. Its subcellular location is the cytoskeleton. It localises to the nucleus. Functionally, serine peptidase whose precise substrate specificity remains unclear. Does not cleave peptides after a arginine or lysine residue. Regulates trans-Golgi network morphology and sorting by regulating the membrane binding of the AP-1 complex. May play a role in the regulation of synaptic vesicle exocytosis. This Pongo abelii (Sumatran orangutan) protein is Prolyl endopeptidase-like (PREPL).